A 243-amino-acid polypeptide reads, in one-letter code: Protein S40-7 (243 aa).

Disordered stretches follow at residues 1–68 and 107–143; these read MNKN…KSGL and SSTA…ERLP. Positions 10–20 are enriched in polar residues; sequence SSPSSLATISD. Residues 22–32 are compositionally biased toward acidic residues; the sequence is ADGELNEDDIF. The span at 47 to 67 shows a compositional bias: polar residues; it reads PVSSPAKQQTPARQLQRSKSG.

It belongs to the senescence regulator S40 family.

Its subcellular location is the cytoplasm. The protein is Protein S40-7 of Arabidopsis thaliana (Mouse-ear cress).